The sequence spans 129 residues: Glycine cleavage system H protein (129 aa).

Positions 22-103 (TGTVGITDYA…AHTAWIMKIE (82 aa)) constitute a Lipoyl-binding domain. At K63 the chain carries N6-lipoyllysine.

It belongs to the GcvH family. In terms of assembly, the glycine cleavage system is composed of four proteins: P, T, L and H. The cofactor is (R)-lipoate.

Functionally, the glycine cleavage system catalyzes the degradation of glycine. The H protein shuttles the methylamine group of glycine from the P protein to the T protein. This Acidobacterium capsulatum (strain ATCC 51196 / DSM 11244 / BCRC 80197 / JCM 7670 / NBRC 15755 / NCIMB 13165 / 161) protein is Glycine cleavage system H protein.